A 319-amino-acid polypeptide reads, in one-letter code: ATP-dependent 6-phosphofructokinase (319 aa).

Residue glycine 11 coordinates ATP. 21–25 (RAVVR) is an ADP binding site. ATP-binding positions include 72-73 (RC) and 102-105 (GDGS). Aspartate 103 is a Mg(2+) binding site. 125-127 (TID) lines the substrate pocket. Aspartate 127 (proton acceptor) is an active-site residue. Arginine 154 lines the ADP pocket. Substrate is bound by residues arginine 162 and 169 to 171 (MGR). ADP is bound by residues 185–187 (GAE), arginine 211, and 213–215 (KKH). Substrate is bound by residues glutamate 222, arginine 243, and 249–252 (HMQR).

The protein belongs to the phosphofructokinase type A (PFKA) family. ATP-dependent PFK group I subfamily. Prokaryotic clade 'B1' sub-subfamily. In terms of assembly, homotetramer. Requires Mg(2+) as cofactor.

Its subcellular location is the cytoplasm. The catalysed reaction is beta-D-fructose 6-phosphate + ATP = beta-D-fructose 1,6-bisphosphate + ADP + H(+). The protein operates within carbohydrate degradation; glycolysis; D-glyceraldehyde 3-phosphate and glycerone phosphate from D-glucose: step 3/4. With respect to regulation, allosterically activated by ADP and other diphosphonucleosides, and allosterically inhibited by phosphoenolpyruvate. Catalyzes the phosphorylation of D-fructose 6-phosphate to fructose 1,6-bisphosphate by ATP, the first committing step of glycolysis. In Macrococcus caseolyticus (strain JCSC5402) (Macrococcoides caseolyticum), this protein is ATP-dependent 6-phosphofructokinase.